The sequence spans 221 residues: Kinetochore protein Spc25 (221 aa).

Positions 63–114 (VIQRREEMEKRVSFMEELAQEVEATKQRNLVMREQIKQQKMLVRQRKNEIME) form a coiled coil.

The protein belongs to the SPC25 family. Component of the Ndc80 complex, which is composed of Ndc80, Nuf2 and Spc25.

Its subcellular location is the nucleus. It is found in the chromosome. The protein localises to the centromere. It localises to the kinetochore. In terms of biological role, acts as a component of the essential kinetochore-associated Ndc80 complex, which is required for chromosome segregation and spindle checkpoint activity during meiosis and mitosis. Required for kinetochore integrity and the organization of stable microtubule binding sites in the outer plate of the kinetochore. Participates in SAC signaling that responds specifically to disruptions in spindle microtubule dynamics. The NDC80 complex synergistically enhances the affinity of the SKA1 complex for microtubules and may allow the NDC80 complex to track depolymerizing microtubules. In Drosophila eugracilis (Fruit fly), this protein is Kinetochore protein Spc25.